Consider the following 148-residue polypeptide: UPF0756 membrane protein YeaL (148 aa).

Transmembrane regions (helical) follow at residues Ala14–Val34, Leu51–Leu71, Leu86–Met106, and Val121–Val141.

The protein belongs to the UPF0756 family.

The protein resides in the cell membrane. The chain is UPF0756 membrane protein YeaL from Salmonella arizonae (strain ATCC BAA-731 / CDC346-86 / RSK2980).